Reading from the N-terminus, the 245-residue chain is Ribonuclease PH (245 aa).

Residues R87 and 125 to 127 (GTR) contribute to the phosphate site.

It belongs to the RNase PH family. Homohexameric ring arranged as a trimer of dimers.

The catalysed reaction is tRNA(n+1) + phosphate = tRNA(n) + a ribonucleoside 5'-diphosphate. Its function is as follows. Phosphorolytic 3'-5' exoribonuclease that plays an important role in tRNA 3'-end maturation. Removes nucleotide residues following the 3'-CCA terminus of tRNAs; can also add nucleotides to the ends of RNA molecules by using nucleoside diphosphates as substrates, but this may not be physiologically important. Probably plays a role in initiation of 16S rRNA degradation (leading to ribosome degradation) during starvation. In Streptomyces griseus subsp. griseus (strain JCM 4626 / CBS 651.72 / NBRC 13350 / KCC S-0626 / ISP 5235), this protein is Ribonuclease PH.